A 67-amino-acid polypeptide reads, in one-letter code: Large ribosomal subunit protein bL31 (67 aa).

The Zn(2+) site is built by Cys16, Cys18, Cys36, and Cys39.

It belongs to the bacterial ribosomal protein bL31 family. Type A subfamily. As to quaternary structure, part of the 50S ribosomal subunit. Zn(2+) serves as cofactor.

Binds the 23S rRNA. This chain is Large ribosomal subunit protein bL31, found in Desulforudis audaxviator (strain MP104C).